A 122-amino-acid chain; its full sequence is Pollen allergen Phl p 2 (122 aa).

An N-terminal signal peptide occupies residues 1–26; it reads MSMASSSSSSLLAMAVLAALFAGAWC. The region spanning 41–120 is the Expansin-like CBD domain; the sequence is KHLAVLVKYE…KYTIGATYAP (80 aa).

Belongs to the expansin family. Expansin B subfamily. Pollen specific.

It localises to the secreted. The polypeptide is Pollen allergen Phl p 2 (PHLPII) (Phleum pratense (Common timothy)).